The following is a 525-amino-acid chain: MTENIHKHRILILDFGSQYTQLVARRVRELGVYCELWAWDVTEAQIRDFNPSGIILSGGPESTTEENSPRAPQYVFEAGVPVFGVCYGMQTMAMQLGGHVEGSNEREFGYAQVEVLTDSALVRGIEDSLTADGKPLLDVWMSHGDKVTAIPSDFVAVASTESCPFAIMANEEKRFYGVQFHPEVTHTRQGMRMLERFVRDICQCEALWTPAKIIDDAVARIREQVGDDKVILGLSGGVDSSVTAMLLHRAIGKNLTCVFVDNGLLRLNEAEQVMDMFGDHFGLNIVHVPAEERFLSALAGENDPEAKRKIIGRVFVEVFDEEALKLEDVKWLAQGTIYPDVIESAASATGKAHVIKSHHNVGGLPKEMKMGLVEPLKELFKDEVRKIGLELGLPYDMLYRHPFPGPGLGVRVLGEVKKEYCDLLRRADAIFIEELRKADLYDKVSQAFTVFLPVRSVGVMGDGRKYDWVVSLRAVETIDFMTAHWAHLPYDFLGRVSNRIINEVNGISRVVYDISGKPPATIEWE.

Positions Arg-9 to Leu-207 constitute a Glutamine amidotransferase type-1 domain. The active-site Nucleophile is the Cys-86. Catalysis depends on residues His-181 and Glu-183. A GMPS ATP-PPase domain is found at Trp-208–Arg-400. An ATP-binding site is contributed by Ser-235–Ser-241.

As to quaternary structure, homodimer.

It carries out the reaction XMP + L-glutamine + ATP + H2O = GMP + L-glutamate + AMP + diphosphate + 2 H(+). It participates in purine metabolism; GMP biosynthesis; GMP from XMP (L-Gln route): step 1/1. Catalyzes the synthesis of GMP from XMP. The protein is GMP synthase [glutamine-hydrolyzing] of Salmonella newport (strain SL254).